The following is a 381-amino-acid chain: Mannitol-1-phosphate 5-dehydrogenase (381 aa).

3-14 (AVHFGAGNIGRG) contributes to the NAD(+) binding site.

The protein belongs to the mannitol dehydrogenase family.

It catalyses the reaction D-mannitol 1-phosphate + NAD(+) = beta-D-fructose 6-phosphate + NADH + H(+). This chain is Mannitol-1-phosphate 5-dehydrogenase, found in Photobacterium profundum (strain SS9).